We begin with the raw amino-acid sequence, 103 residues long: Probable protease inhibitor Egf0.4a (103 aa).

The signal sequence occupies residues 1-22; the sequence is MMSEKFALVLLVACIAFIGIET. One can recognise a TIL domain in the interval 35-87; that stretch reads CGENEAYDSMRRGCEKRCDDHNPTFCFKFTTVCWCEKGYVRDKSDTCIKVEDC.

This sequence belongs to the polydnaviridae EGF-like motif protein family.

This Microplitis demolitor (Parasitoid wasp) protein is Probable protease inhibitor Egf0.4a (O4).